The primary structure comprises 286 residues: Phosphoribosylaminoimidazole-succinocarboxamide synthase (286 aa).

The protein belongs to the SAICAR synthetase family.

The catalysed reaction is 5-amino-1-(5-phospho-D-ribosyl)imidazole-4-carboxylate + L-aspartate + ATP = (2S)-2-[5-amino-1-(5-phospho-beta-D-ribosyl)imidazole-4-carboxamido]succinate + ADP + phosphate + 2 H(+). The protein operates within purine metabolism; IMP biosynthesis via de novo pathway; 5-amino-1-(5-phospho-D-ribosyl)imidazole-4-carboxamide from 5-amino-1-(5-phospho-D-ribosyl)imidazole-4-carboxylate: step 1/2. The chain is Phosphoribosylaminoimidazole-succinocarboxamide synthase from Histophilus somni (strain 2336) (Haemophilus somnus).